We begin with the raw amino-acid sequence, 927 residues long: Transmembrane protein 132 homolog (927 aa).

An N-terminal signal peptide occupies residues 1–18 (MLKKLWICISCIVTTALS). Residues 749 to 769 (FHIFVLTIIGLIILFLFISFV) traverse the membrane as a helical segment. The segment at 789–842 (LSSSSGSNSRQEETNEWVWLSQPQPPSSTISSGYSGNKSTAERQSSNGDDPSRT) is disordered. The span at 817–842 (TISSGYSGNKSTAERQSSNGDDPSRT) shows a compositional bias: polar residues.

Belongs to the TMEM132 family. Interacts with gex-3. As to expression, specifically expressed in neurons.

The protein resides in the membrane. In terms of biological role, regulates neuronal morphology via inhibition of the WAVE regulatory complex (WCR), a complex that controls F-actin cytoskeletal dynamics. This chain is Transmembrane protein 132 homolog, found in Caenorhabditis elegans.